A 464-amino-acid polypeptide reads, in one-letter code: 3-isopropylmalate dehydratase large subunit (464 aa).

Residues Cys337, Cys397, and Cys400 each contribute to the [4Fe-4S] cluster site.

The protein belongs to the aconitase/IPM isomerase family. LeuC type 1 subfamily. Heterodimer of LeuC and LeuD. The cofactor is [4Fe-4S] cluster.

It carries out the reaction (2R,3S)-3-isopropylmalate = (2S)-2-isopropylmalate. It functions in the pathway amino-acid biosynthesis; L-leucine biosynthesis; L-leucine from 3-methyl-2-oxobutanoate: step 2/4. Its function is as follows. Catalyzes the isomerization between 2-isopropylmalate and 3-isopropylmalate, via the formation of 2-isopropylmaleate. This chain is 3-isopropylmalate dehydratase large subunit, found in Bacillus cereus (strain ATCC 14579 / DSM 31 / CCUG 7414 / JCM 2152 / NBRC 15305 / NCIMB 9373 / NCTC 2599 / NRRL B-3711).